Here is a 347-residue protein sequence, read N- to C-terminus: Probable dual-specificity RNA methyltransferase RlmN (347 aa).

Glu93 functions as the Proton acceptor in the catalytic mechanism. Positions 99-333 (TEKRLTACLS…VSLRKSRGLD (235 aa)) constitute a Radical SAM core domain. A disulfide bond links Cys106 and Cys338. [4Fe-4S] cluster-binding residues include Cys113, Cys117, and Cys120. Residues 160 to 161 (GE), Ser190, 219 to 221 (SLH), and Asn295 each bind S-adenosyl-L-methionine. Cys338 (S-methylcysteine intermediate) is an active-site residue.

It belongs to the radical SAM superfamily. RlmN family. [4Fe-4S] cluster is required as a cofactor.

It localises to the cytoplasm. The enzyme catalyses adenosine(2503) in 23S rRNA + 2 reduced [2Fe-2S]-[ferredoxin] + 2 S-adenosyl-L-methionine = 2-methyladenosine(2503) in 23S rRNA + 5'-deoxyadenosine + L-methionine + 2 oxidized [2Fe-2S]-[ferredoxin] + S-adenosyl-L-homocysteine. It catalyses the reaction adenosine(37) in tRNA + 2 reduced [2Fe-2S]-[ferredoxin] + 2 S-adenosyl-L-methionine = 2-methyladenosine(37) in tRNA + 5'-deoxyadenosine + L-methionine + 2 oxidized [2Fe-2S]-[ferredoxin] + S-adenosyl-L-homocysteine. Specifically methylates position 2 of adenine 2503 in 23S rRNA and position 2 of adenine 37 in tRNAs. The sequence is that of Probable dual-specificity RNA methyltransferase RlmN from Prochlorococcus marinus (strain MIT 9301).